A 203-amino-acid polypeptide reads, in one-letter code: Orotate phosphoribosyltransferase (203 aa).

5-phospho-alpha-D-ribose 1-diphosphate-binding positions include Arg-94, Lys-95, Lys-98, His-100, and Asp-119 to Ser-127. Residues Thr-123 and Arg-151 each contribute to the orotate site.

It belongs to the purine/pyrimidine phosphoribosyltransferase family. PyrE subfamily. As to quaternary structure, homodimer. Requires Mg(2+) as cofactor.

The catalysed reaction is orotidine 5'-phosphate + diphosphate = orotate + 5-phospho-alpha-D-ribose 1-diphosphate. Its pathway is pyrimidine metabolism; UMP biosynthesis via de novo pathway; UMP from orotate: step 1/2. Functionally, catalyzes the transfer of a ribosyl phosphate group from 5-phosphoribose 1-diphosphate to orotate, leading to the formation of orotidine monophosphate (OMP). This chain is Orotate phosphoribosyltransferase, found in Staphylothermus marinus (strain ATCC 43588 / DSM 3639 / JCM 9404 / F1).